The primary structure comprises 419 residues: Putative L-glutamine:3-amino-2,3-dideoxy-scyllo-inosose aminotransferase (419 aa).

N6-(pyridoxal phosphate)lysine is present on Lys-199.

It belongs to the DegT/DnrJ/EryC1 family. L-glutamine:2-deoxy-scyllo-inosose/scyllo-inosose aminotransferase subfamily. It depends on pyridoxal 5'-phosphate as a cofactor.

It carries out the reaction 3-amino-2,3-dideoxy-scyllo-inosose + L-glutamine = 2-deoxystreptamine + 2-oxoglutaramate. It participates in metabolic intermediate biosynthesis; 2-deoxystreptamine biosynthesis; 2-deoxystreptamine from D-glucose 6-phosphate: step 4/4. It functions in the pathway antibiotic biosynthesis; kanamycin biosynthesis. Catalyzes the transamination of 3-amino-2,3-dideoxy-scyllo-inosose (amino-DOI) into 2-deoxystreptamine (DOS). The sequence is that of Putative L-glutamine:3-amino-2,3-dideoxy-scyllo-inosose aminotransferase (kanD) from Streptomyces kanamyceticus.